The chain runs to 396 residues: MNFNKKTIEDIQVKGKKVLVRCDFNVPLKDGVITDENRLNGALPTIKYLVENGAKVILCSHMGKPKGEPKPELSLAPVAKRLSELLGKEIKFAPDNTVVGENAKAAVAEMKDGDVVLLENTRYRKEETKNGEEFSKELASLAEIFVNDAFGTAHRAHCSTVGVTDYIDTAVCGYLIQKELKFLGNAVETPEKPFVAILGGAKVSDKIAVINNLLDKVDTIIIGGGMAYTFLKAQGYEIGTSLVEEDRLDYAKEMIAKAEEKGVNFLLPVDHRVAAEFKDVEATVTEDQNIPAGTMGLDIGPKTEKLYADAVKDAKTVIWNGPMGVFEFENFNKGTIAVAKAMADSNATTIIGGGDSAAAVNILGFGDKMTHISTGGGASLEFLEGKVLPGISALND.

Residues 23-25 (DFN), Arg-38, 61-64 (HMGK), Arg-122, and Arg-155 contribute to the substrate site. ATP-binding positions include Lys-206, Gly-296, Glu-327, and 353-356 (GGDS).

The protein belongs to the phosphoglycerate kinase family. As to quaternary structure, monomer.

It localises to the cytoplasm. It catalyses the reaction (2R)-3-phosphoglycerate + ATP = (2R)-3-phospho-glyceroyl phosphate + ADP. It functions in the pathway carbohydrate degradation; glycolysis; pyruvate from D-glyceraldehyde 3-phosphate: step 2/5. This is Phosphoglycerate kinase from Clostridium botulinum (strain Alaska E43 / Type E3).